A 442-amino-acid chain; its full sequence is F-box only protein 39 (442 aa).

The F-box domain occupies 16 to 61; the sequence is WAFLPDLCLCRVFWWLGDRDRSRAALVCRKWNQMMYSAELWRYRTI.

Directly interacts with SKP1 and CUL1.

In terms of biological role, substrate-recognition component of the SCF (SKP1-CUL1-F-box protein)-type E3 ubiquitin ligase complex. In Homo sapiens (Human), this protein is F-box only protein 39 (FBXO39).